The sequence spans 376 residues: Protein-glutamate methylesterase/protein-glutamine glutaminase (376 aa).

Residues 4 to 121 form the Response regulatory domain; sequence KVLVVDDSSF…ARNRDEAVSL (118 aa). At Asp-55 the chain carries 4-aspartylphosphate. Residues 142–161 are disordered; that stretch reads SSQSTSTVESRTATTRTATS. Low complexity predominate over residues 145 to 161; that stretch reads STSTVESRTATTRTATS. One can recognise a CheB-type methylesterase domain in the interval 183–376; sequence TGKKYQLTAI…ERMLVEVGLK (194 aa). Active-site residues include Ser-195, His-222, and Asp-318.

This sequence belongs to the CheB family. Post-translationally, phosphorylated by CheA. Phosphorylation of the N-terminal regulatory domain activates the methylesterase activity.

It is found in the cytoplasm. It catalyses the reaction [protein]-L-glutamate 5-O-methyl ester + H2O = L-glutamyl-[protein] + methanol + H(+). The enzyme catalyses L-glutaminyl-[protein] + H2O = L-glutamyl-[protein] + NH4(+). Functionally, involved in chemotaxis. Part of a chemotaxis signal transduction system that modulates chemotaxis in response to various stimuli. Catalyzes the demethylation of specific methylglutamate residues introduced into the chemoreceptors (methyl-accepting chemotaxis proteins or MCP) by CheR. Also mediates the irreversible deamidation of specific glutamine residues to glutamic acid. This Aliivibrio fischeri (strain ATCC 700601 / ES114) (Vibrio fischeri) protein is Protein-glutamate methylesterase/protein-glutamine glutaminase.